The chain runs to 307 residues: NAD kinase (307 aa).

The active-site Proton acceptor is D85. NAD(+) is bound by residues 85–86 (DG), R90, 159–160 (NE), D189, and 200–205 (TAYAFS).

The protein belongs to the NAD kinase family. The cofactor is a divalent metal cation.

Its subcellular location is the cytoplasm. The catalysed reaction is NAD(+) + ATP = ADP + NADP(+) + H(+). Involved in the regulation of the intracellular balance of NAD and NADP, and is a key enzyme in the biosynthesis of NADP. Catalyzes specifically the phosphorylation on 2'-hydroxyl of the adenosine moiety of NAD to yield NADP. The sequence is that of NAD kinase from Mycobacterium bovis (strain ATCC BAA-935 / AF2122/97).